The chain runs to 181 residues: MILALAMSTDAFAAAVGKGTALRNPRLSEALRTGIIFGVIEGLTPLVGWALGSIAADSVADWDHWIAFTLLLILGLLMIRAGLRAEEPEATPAIRHSFWLLAATGFATSIDAMAVGVSLAFIDNNILITAAAIGLATFLMVTLGVMVGRLIGNVAGKWAEILGGLALMGVGTVILYEHLTM.

The next 5 membrane-spanning stretches (helical) occupy residues 35 to 55, 59 to 79, 102 to 122, 126 to 146, and 161 to 181; these read IIFG…GSIA, VADW…LLMI, AATG…LAFI, ILIT…LGVM, and ILGG…HLTM.

The protein belongs to the MntP (TC 9.B.29) family.

It is found in the cell inner membrane. Functionally, probably functions as a manganese efflux pump. The polypeptide is Putative manganese efflux pump MntP (Nitrosomonas eutropha (strain DSM 101675 / C91 / Nm57)).